The chain runs to 461 residues: Photosystem II CP43 reaction center protein (461 aa).

Residues 1–2 constitute a propeptide that is removed on maturation; that stretch reads ME. The residue at position 3 (Thr-3) is an N-acetylthreonine. Thr-3 is modified (phosphothreonine). Transmembrane regions (helical) follow at residues 57–81, 122–143, 166–188, 243–263, and 279–300; these read LFEVAHFIPEKPMYEQGLILLPHLA, IIGPEVLEESFPFFGYDWKDKN, KAMFFGGVYDTWAPGGGDVRVIS, KPFSWARRALVWSGEAYLSYS, and WFNNTAYPSEFFGPTGPEASQA. Glu-355 is a binding site for [CaMn4O5] cluster. Residues 435–459 form a helical membrane-spanning segment; that stretch reads RARAASGGFEKGLDRENEPVLSMKL.

The protein belongs to the PsbB/PsbC family. PsbC subfamily. In terms of assembly, PSII is composed of 1 copy each of membrane proteins PsbA, PsbB, PsbC, PsbD, PsbE, PsbF, PsbH, PsbI, PsbJ, PsbK, PsbL, PsbM, PsbT, PsbX, PsbY, PsbZ, Psb30/Ycf12, at least 3 peripheral proteins of the oxygen-evolving complex and a large number of cofactors. It forms dimeric complexes. The cofactor is Binds multiple chlorophylls and provides some of the ligands for the Ca-4Mn-5O cluster of the oxygen-evolving complex. It may also provide a ligand for a Cl- that is required for oxygen evolution. PSII binds additional chlorophylls, carotenoids and specific lipids..

The protein localises to the plastid. It localises to the cyanelle thylakoid membrane. Its function is as follows. One of the components of the core complex of photosystem II (PSII). It binds chlorophyll and helps catalyze the primary light-induced photochemical processes of PSII. PSII is a light-driven water:plastoquinone oxidoreductase, using light energy to abstract electrons from H(2)O, generating O(2) and a proton gradient subsequently used for ATP formation. The chain is Photosystem II CP43 reaction center protein from Cyanophora paradoxa.